The chain runs to 20 residues: Pregnancy-associated glycoprotein 71D (20 aa).

Asn-4 is a glycosylation site (N-linked (GlcNAc...) asparagine).

It belongs to the peptidase A1 family. As to expression, chorionic epithelium (trophectoderm) and placental cotyledons.

It localises to the secreted. It is found in the extracellular space. In Bison bonasus (European bison), this protein is Pregnancy-associated glycoprotein 71D.